A 154-amino-acid polypeptide reads, in one-letter code: UPF0178 protein H16_B0290 (154 aa).

This sequence belongs to the UPF0178 family.

The sequence is that of UPF0178 protein H16_B0290 from Cupriavidus necator (strain ATCC 17699 / DSM 428 / KCTC 22496 / NCIMB 10442 / H16 / Stanier 337) (Ralstonia eutropha).